Reading from the N-terminus, the 410-residue chain is Dipeptidase 1 (410 aa).

The N-terminal stretch at 1–16 (MWTSWWLWPLVAVCTA) is a signal peptide. Zn(2+)-binding residues include H36 and D38. N57 carries an N-linked (GlcNAc...) asparagine glycan. Residues C87 and C170 are joined by a disulfide bond. Residue E141 participates in Zn(2+) binding. H168 is a binding site for substrate. Positions 214 and 235 each coordinate Zn(2+). The cysteines at positions 242 and 274 are disulfide-linked. Substrate-binding residues include R246 and D304. S384 carries the GPI-anchor amidated serine lipid modification. Positions 385–410 (EAPSLHRRPGALLASLSLLLLSLGLL) are cleaved as a propeptide — removed in mature form.

Belongs to the metallo-dependent hydrolases superfamily. Peptidase M19 family. Homodimer; disulfide-linked. Requires Zn(2+) as cofactor.

The protein resides in the apical cell membrane. It is found in the cell projection. It localises to the microvillus membrane. The catalysed reaction is an L-aminoacyl-L-amino acid + H2O = 2 an L-alpha-amino acid. It catalyses the reaction leukotriene D4 + H2O = leukotriene E4 + glycine. The enzyme catalyses L-cystine-bis-glycine + 2 H2O = L-cystine + 2 glycine. It carries out the reaction a beta-lactam + H2O = a substituted beta-amino acid. The catalysed reaction is glycyldehydrophenylalanine + H2O = 2,3-didehydrophenylalanine + glycine. With respect to regulation, inhibited by L-penicillamine. Beta-lactamase activity is inhibited by cilastatin. Functionally, hydrolyzes a wide range of dipeptides including the conversion of leukotriene D4 to leukotriene E4. Hydrolyzes cystinyl-bis-glycine (cys-bis-gly) formed during glutathione degradation. Also possesses beta lactamase activity and hydrolytically inactivates beta-lactam antibiotics. Independently of its dipeptidase activity, acts as an adhesion receptor for neutrophil recruitment from bloodstream into inflamed lungs and liver. The polypeptide is Dipeptidase 1 (DPEP1) (Oryctolagus cuniculus (Rabbit)).